The sequence spans 92 residues: N(2)-fixation sustaining protein CowN (92 aa).

This sequence belongs to the CowN family.

Its function is as follows. Is required to sustain N(2)-dependent growth in the presence of low levels of carbon monoxide (CO). Probably acts by protecting the N(2) fixation ability of the nitrogenase complex, which is inactivated in the presence of CO. The sequence is that of N(2)-fixation sustaining protein CowN from Rhodobacter capsulatus (strain ATCC BAA-309 / NBRC 16581 / SB1003).